We begin with the raw amino-acid sequence, 120 residues long: MDYEFLRDITGVVKVRMSMGHEVVGHWFNEEVKENLALLDEVEQAAHALKGSERSWQRAGHEYTLWMDGEEVMVRANQLEFAGDEMEEGMNYYDEESLSLCGVEDFLQVVAAYRNFVQQK.

Belongs to the UPF0231 family.

This chain is UPF0231 protein YacL, found in Escherichia coli O139:H28 (strain E24377A / ETEC).